The primary structure comprises 492 residues: E1B 55 kDa protein (492 aa).

The segment at 22-112 is disordered; that stretch reads ENMEGSQDED…ERNPSGNNSR (91 aa). Over residues 34–44 the composition is skewed to low complexity; sequence RLLASAASGSS. 2 positions are modified to phosphoserine: serine 486 and serine 487. Threonine 491 carries the post-translational modification Phosphothreonine.

It belongs to the adenoviridae E1B 55 kDa protein family. In terms of assembly, interacts with host PML-4 and PML-5; this interaction promotes efficient subnuclear targeting of E1B-55K to PML nuclear bodies. Interacts with E4-ORF3 protein. Interacts with E4-ORF6 protein.

The protein localises to the host nucleus. The protein resides in the host cytoplasm. Plays a major role to prevent cellular inhibition of viral genome replication. Assembles an SCF-like E3 ubiquitin ligase complex based on the cellular proteins ELOB, ELOC, CUL5 and RBX1, in cooperation with viral E4orf6. This viral RING-type ligase ubiquitinates cellular substrates and targets them to proteasomal degradation: TP53/p53, LIG4, MRE11-RAD50-NBS1 (MRN) complex, ITGA3, DAXX and BLM. E1B-55K probably acts as the substrate-specific adapter of the SCF-like E3 ubiquitin ligase complex. Degradation of host TP53/p53 activity is essential for preventing E1A-induced TP53 accumulation that would otherwise lead to cell apoptosis and growth arrest. E1B-55K also inactivates TP53 transcription-factor activity by binding its transactivation domain. E1B-55K also functions as a SUMO1 E3 ligase for TP53 which causes the latter to be sequestered in promyelocytic leukemia (PML) nuclear bodies thereby contributing to maximal inhibition of TP53 function. In Human adenovirus B serotype 7 (HAdV-7), this protein is E1B 55 kDa protein.